A 1272-amino-acid polypeptide reads, in one-letter code: Ubiquitin carboxyl-terminal hydrolase 2 (1272 aa).

One can recognise a USP domain in the interval 736 to 1258; sequence TGINNIGNTC…TPYFLVYVKQ (523 aa). The active-site Nucleophile is the Cys-745. The disordered stretch occupies residues 884-918; sequence DGLNGDVGTDANRKKNESNDAEVSENEDTTGLTSP. Residues 902 to 911 show a composition bias toward acidic residues; it reads NDAEVSENED. Ser-907 carries the post-translational modification Phosphoserine. The Proton acceptor role is filled by His-1209.

Belongs to the peptidase C19 family. Forms a ternary complex with RSP5 and RUP1. Interacts with RSP5. Interacts with FZO1.

It carries out the reaction Thiol-dependent hydrolysis of ester, thioester, amide, peptide and isopeptide bonds formed by the C-terminal Gly of ubiquitin (a 76-residue protein attached to proteins as an intracellular targeting signal).. Has an ATP-independent isopeptidase activity, cleaving at the C-terminus of the ubiquitin moiety in natural or engineered linear fusion proteins, irrespective of their size or the presence of an N-terminal extension to ubiquitin. Hydrolyzes polyubiquitinated 'Lys-63' polyubiquitin chains in RPO21, producing mono-ubiquitinated RNA polymerase II. Removes ubiquitin chains that initiate proteolysis of FZO1 and inhibit mitochondrial fusion. The sequence is that of Ubiquitin carboxyl-terminal hydrolase 2 (UBP2) from Saccharomyces cerevisiae (strain ATCC 204508 / S288c) (Baker's yeast).